The sequence spans 372 residues: MPKERYIGLISGTSMDALDTALVQFDPLKIIATHGEPIPTELKKNLVALSTGTDNSIPSMGETDVALGRLFGEAVLTLLEKAKVSSDSIQAIGSHGQTIRHMPNGKHPFTLQIGDPNTIAALTGITTVADFRRRDMALGGQGAPLAPAFHEFLLRDQSENRLILNIGGIANLTFLPRDPEKSTIGFDTGPGNTLLDAWCLMNLNKDYDDQGQWAASGRVQEKLVAQLLAEPYFQTPPPKSTGREYFNLNWLKKNLNGEKFDPVDIQATLVELTARSVANCCRNFSMDSGSLWLCGGGARNHHLVNRLKVLCKPLRVTTTEEIGIHPDWLEAVCFAWLAKQTLEKKPGNLPSVTGAKKSAILGAIYWGEKFNY.

12–19 (GTSMDALD) contributes to the ATP binding site.

Belongs to the anhydro-N-acetylmuramic acid kinase family.

The catalysed reaction is 1,6-anhydro-N-acetyl-beta-muramate + ATP + H2O = N-acetyl-D-muramate 6-phosphate + ADP + H(+). It functions in the pathway amino-sugar metabolism; 1,6-anhydro-N-acetylmuramate degradation. It participates in cell wall biogenesis; peptidoglycan recycling. Functionally, catalyzes the specific phosphorylation of 1,6-anhydro-N-acetylmuramic acid (anhMurNAc) with the simultaneous cleavage of the 1,6-anhydro ring, generating MurNAc-6-P. Is required for the utilization of anhMurNAc either imported from the medium or derived from its own cell wall murein, and thus plays a role in cell wall recycling. The sequence is that of Anhydro-N-acetylmuramic acid kinase from Coxiella burnetii (strain CbuK_Q154) (Coxiella burnetii (strain Q154)).